The chain runs to 276 residues: Aldo-keto reductase Mjls_1919 (276 aa).

Tyrosine 50 (proton donor) is an active-site residue. NADPH-binding residues include leucine 190, isoleucine 228, lysine 230, serine 231, valine 232, arginine 236, serine 239, and asparagine 240.

Belongs to the aldo/keto reductase family.

The protein is Aldo-keto reductase Mjls_1919 of Mycobacterium sp. (strain JLS).